Consider the following 299-residue polypeptide: Acetylglutamate kinase (299 aa).

Residues 70 to 71, Arg92, and Asn186 each bind substrate; that span reads GG.

This sequence belongs to the acetylglutamate kinase family. ArgB subfamily.

It localises to the cytoplasm. It catalyses the reaction N-acetyl-L-glutamate + ATP = N-acetyl-L-glutamyl 5-phosphate + ADP. Its pathway is amino-acid biosynthesis; L-arginine biosynthesis; N(2)-acetyl-L-ornithine from L-glutamate: step 2/4. Catalyzes the ATP-dependent phosphorylation of N-acetyl-L-glutamate. The chain is Acetylglutamate kinase from Thermoanaerobacter sp. (strain X514).